We begin with the raw amino-acid sequence, 96 residues long: Transcriptional regulator ATRY (96 aa).

Residues 1-12 (VICTACGQQVNQ) form a GATA-type; atypical zinc finger. The ADD domain occupies 1 to 96 (VICTACGQQV…IAVCDSVLEN (96 aa)). A PHD-type; atypical zinc finger spans residues 27-82 (LICKRWCAEGGNLICCDSCHNAFCKKCIWRNLGRKEISKIMNEKNEWHCYICCPEP).

This sequence belongs to the SNF2/RAD54 helicase family. As to expression, expressed in developing and adult testis. Also weakly expressed in prostate and epididymis.

It is found in the nucleus. The enzyme catalyses ATP + H2O = ADP + phosphate + H(+). Could be a global transcriptional regulator. Modifies gene expression by affecting chromatin. In Notamacropus eugenii (Tammar wallaby), this protein is Transcriptional regulator ATRY (ATRY).